The primary structure comprises 416 residues: Probable mannose-6-phosphate isomerase (416 aa).

Zn(2+)-binding residues include glutamine 99, histidine 101, glutamate 126, and histidine 259. Residue arginine 278 is part of the active site.

This sequence belongs to the mannose-6-phosphate isomerase type 1 family. Zn(2+) is required as a cofactor.

The protein localises to the cytoplasm. The enzyme catalyses D-mannose 6-phosphate = D-fructose 6-phosphate. The protein operates within nucleotide-sugar biosynthesis; GDP-alpha-D-mannose biosynthesis; alpha-D-mannose 1-phosphate from D-fructose 6-phosphate: step 1/2. In terms of biological role, involved in the synthesis of the GDP-mannose and dolichol-phosphate-mannose required for a number of critical mannosyl transfer reactions. This Caenorhabditis elegans protein is Probable mannose-6-phosphate isomerase.